A 380-amino-acid polypeptide reads, in one-letter code: Queuine tRNA-ribosyltransferase (380 aa).

The active-site Proton acceptor is D95. Substrate is bound by residues 95 to 99 (DSGGF), D149, Q192, and G219. An RNA binding region spans residues 250–256 (GVGSPDS). Residue D269 is the Nucleophile of the active site. An RNA binding; important for wobble base 34 recognition region spans residues 274–278 (TRIGR). Zn(2+)-binding residues include C307, C309, C312, and H338.

Belongs to the queuine tRNA-ribosyltransferase family. In terms of assembly, homodimer. Within each dimer, one monomer is responsible for RNA recognition and catalysis, while the other monomer binds to the replacement base PreQ1. It depends on Zn(2+) as a cofactor.

It carries out the reaction 7-aminomethyl-7-carbaguanine + guanosine(34) in tRNA = 7-aminomethyl-7-carbaguanosine(34) in tRNA + guanine. Its pathway is tRNA modification; tRNA-queuosine biosynthesis. In terms of biological role, catalyzes the base-exchange of a guanine (G) residue with the queuine precursor 7-aminomethyl-7-deazaguanine (PreQ1) at position 34 (anticodon wobble position) in tRNAs with GU(N) anticodons (tRNA-Asp, -Asn, -His and -Tyr). Catalysis occurs through a double-displacement mechanism. The nucleophile active site attacks the C1' of nucleotide 34 to detach the guanine base from the RNA, forming a covalent enzyme-RNA intermediate. The proton acceptor active site deprotonates the incoming PreQ1, allowing a nucleophilic attack on the C1' of the ribose to form the product. After dissociation, two additional enzymatic reactions on the tRNA convert PreQ1 to queuine (Q), resulting in the hypermodified nucleoside queuosine (7-(((4,5-cis-dihydroxy-2-cyclopenten-1-yl)amino)methyl)-7-deazaguanosine). This Geobacillus thermodenitrificans (strain NG80-2) protein is Queuine tRNA-ribosyltransferase.